The sequence spans 402 residues: Leucine aminopeptidase 1 (402 aa).

The first 18 residues, 1-18, serve as a signal peptide directing secretion; the sequence is MKISNASLLALLLPAASA. Positions 19-92 are excised as a propeptide; that stretch reads RFVEQAEQNR…GTFNKRPYKK (74 aa). Asparagine 111 and asparagine 184 each carry an N-linked (GlcNAc...) asparagine glycan. The Zn(2+) site is built by histidine 192, aspartate 211, glutamate 250, and aspartate 277. The N-linked (GlcNAc...) asparagine glycan is linked to asparagine 304. Residues cysteine 326 and cysteine 330 are joined by a disulfide bond. Residue histidine 359 coordinates Zn(2+).

The protein belongs to the peptidase M28 family. M28E subfamily. In terms of assembly, monomer. It depends on Zn(2+) as a cofactor.

The protein resides in the secreted. Functionally, extracellular aminopeptidase that allows assimilation of proteinaceous substrates. In Neurospora crassa (strain ATCC 24698 / 74-OR23-1A / CBS 708.71 / DSM 1257 / FGSC 987), this protein is Leucine aminopeptidase 1 (lap1).